We begin with the raw amino-acid sequence, 894 residues long: MENPSASRDNKGFCFPDIPVEEMDGWVKNLISEEDMFSSSSTSELMNFESFASWCNSPSAADILFTQYGLSTSQSIIPFGGLEGSYACEKRPLDCTSVPRSLSHSLDEKMLKALSLFMEFSGEGILAQFWTPIKTGDQYMLSTCDQAYLLDSRLSGYREASRRFTFSAEANQCSYPGLPGRVFISGVPEWTSNVMYYKTAEYLRMKHALDNEVRGSIAIPVLEASGSSCCAVLELVTCREKPNFDVEMNSVCRALQAVNLQTSTIPRRQYLSSNQKEALAEIRDVLRAVCYAHRLPLALAWIPCSYSKGANDELVKVYGKNSKECSLLCIEETSCYVNDMEMEGFVNACLEHYLREGQGIVGKALISNKPSFSSDVKTFDICEYPLVQHARKFGLNAAVATKLRSTFTGDNDYILEFFLPVSMKGSSEQQLLLDSLSGTMQRLCRTLKTVSDAESIDGTEFGSRSVEMTNLPQATVSVGSFHTTFLDTDVNSTRSTFSNISSNKRNEMAGSQGTLQQEISGARRLEKKKSSTEKNVSLNVLQQYFSGSLKDAAKSLGVCPTTLKRICRQHGIMRWPSRKINKVNRSLRKIQTVLDSVQGVEGGLKFDSVTGEFVAVGPFIQEFGTQKSLSSHDEDALARSQGDMDEDVSVEPLEVKSHDGGGVKLEEDVETNHQAGPGSLKKPWTWISKQSGLIYSDDTDIGKRSEEVNKDKEDLCVRRCLSSVALAGDGMNTRIERGNGTVEPNHSISSSMSDSSNSSGAVLLGSSSASLEQNWNQIRTHNNSGESGSSSTLTVKATYREDTVRFKLDPYVVGCSQLYREVAKRFKLQEGAFQLKYLDDEEEWVMLVTDSDLHECFEILNGMRKHTVKFLVRDIPNTAMGSSAGSNGYLGTGT.

One can recognise an RWP-RK domain in the interval 517–603; that stretch reads QEISGARRLE…LDSVQGVEGG (87 aa). The stretch at 578-598 forms a coiled coil; it reads RKINKVNRSLRKIQTVLDSVQ. Residues 732-763 are disordered; sequence NTRIERGNGTVEPNHSISSSMSDSSNSSGAVL. Residues 747–763 are compositionally biased toward low complexity; the sequence is SISSSMSDSSNSSGAVL. A PB1 domain is found at 792-875; it reads TLTVKATYRE…HTVKFLVRDI (84 aa).

The protein resides in the nucleus. In terms of biological role, probable transcription factor. The sequence is that of Protein NLP9 (NLP9) from Arabidopsis thaliana (Mouse-ear cress).